The chain runs to 315 residues: Thymidylate synthase (315 aa).

Residues Arg-29 and 156–157 contribute to the dUMP site; that span reads RR. Cys-176 acts as the Nucleophile in catalysis. DUMP contacts are provided by residues 213–216, Asn-224, and 254–256; these read RSCD and HVY. A (6R)-5,10-methylene-5,6,7,8-tetrahydrofolate-binding site is contributed by Asp-216.

It belongs to the thymidylate synthase family. As to quaternary structure, homodimer.

It catalyses the reaction dUMP + (6R)-5,10-methylene-5,6,7,8-tetrahydrofolate = 7,8-dihydrofolate + dTMP. It functions in the pathway pyrimidine metabolism; dTTP biosynthesis. The protein is Thymidylate synthase (TMP1) of Candida albicans (strain SC5314 / ATCC MYA-2876) (Yeast).